The sequence spans 160 residues: uncharacterized protein (160 aa).

A helical transmembrane segment spans residues 47-67; that stretch reads LLGGFANVAAILTPLVAVLAY.

Its subcellular location is the membrane. This is an uncharacterized protein from Sinorhizobium fredii (strain NBRC 101917 / NGR234).